Consider the following 367-residue polypeptide: C-glycoside deglycosidase alpha subunit (367 aa).

Glu-146 is a Mg(2+) binding site. Residue His-148 is the Proton acceptor of the active site. Positions 178, 276, and 312 each coordinate Mg(2+).

This sequence belongs to the C-glycoside deglycosidase alpha subunit family. As to quaternary structure, heterodimer composed of an alpha subunit (CarB1) and a beta subunit (CarC1). Mg(2+) serves as cofactor.

It carries out the reaction 3''-dehydroisovitexin = 1,5-anhydro-D-erythro-hex-1-en-3-ulose + apigenin. With respect to regulation, activity is strongly reduced in the presence of chelating agents. In terms of biological role, carbon-carbon bond-cleaving enzyme which participates in the metabolism of C-glycosides. Acts on the C6-glycosylated compound 3''-dehydroisovitexin (3''-oxo-isovitexin). Shows weak activity with 3''-dehydroisoorientin (3''-oxo-homoorientin) and 3'-dehydromangiferin (3'-oxo-mangiferin). The polypeptide is C-glycoside deglycosidase alpha subunit (Arthrobacter globiformis (strain ATCC 8010 / DSM 20124 / JCM 1332 / NBRC 12137 / NCIMB 8907 / NRRL B-2979 / 168)).